The primary structure comprises 200 residues: Glutathione peroxidase 1 (200 aa).

A Phosphoserine modification is found at Ser-31. The active site involves Sec-46. A non-standard amino acid (selenocysteine) is located at residue Sec-46. N6-acetyllysine; alternate occurs at positions 85 and 111. 2 positions are modified to N6-succinyllysine; alternate: Lys-85 and Lys-111. Lys-118 carries the N6-acetyllysine modification. Residue Lys-145 is modified to N6-acetyllysine; alternate. Position 145 is an N6-succinyllysine; alternate (Lys-145). Position 194 is a phosphoserine (Ser-194).

Belongs to the glutathione peroxidase family. As to quaternary structure, homotetramer. Interacts with MIEN1. Post-translationally, during periods of oxidative stress, Sec-46 may react with a superoxide radical, irreversibly lose hydroselenide and be converted to dehydroalanine.

It localises to the cytoplasm. It is found in the mitochondrion. The catalysed reaction is 2 glutathione + H2O2 = glutathione disulfide + 2 H2O. The enzyme catalyses a hydroperoxy polyunsaturated fatty acid + 2 glutathione = a hydroxy polyunsaturated fatty acid + glutathione disulfide + H2O. It carries out the reaction tert-butyl hydroperoxide + 2 glutathione = tert-butanol + glutathione disulfide + H2O. It catalyses the reaction cumene hydroperoxide + 2 glutathione = 2-phenylpropan-2-ol + glutathione disulfide + H2O. The catalysed reaction is (13S)-hydroperoxy-(9Z,11E)-octadecadienoate + 2 glutathione = (13S)-hydroxy-(9Z,11E)-octadecadienoate + glutathione disulfide + H2O. The enzyme catalyses (9S)-hydroperoxy-(10E,12Z)-octadecadienoate + 2 glutathione = (9S)-hydroxy-(10E,12Z)-octadecadienoate + glutathione disulfide + H2O. It carries out the reaction (5S)-hydroperoxy-(6E,8Z,11Z,14Z)-eicosatetraenoate + 2 glutathione = (5S)-hydroxy-(6E,8Z,11Z,14Z)-eicosatetraenoate + glutathione disulfide + H2O. It catalyses the reaction (12S)-hydroperoxy-(5Z,8Z,10E,14Z)-eicosatetraenoate + 2 glutathione = (12S)-hydroxy-(5Z,8Z,10E,14Z)-eicosatetraenoate + glutathione disulfide + H2O. The catalysed reaction is (12R)-hydroperoxy-(5Z,8Z,10E,14Z)-eicosatetraenoate + 2 glutathione = (12R)-hydroxy-(5Z,8Z,10E,14Z)-eicosatetraenoate + glutathione disulfide + H2O. The enzyme catalyses (15S)-hydroperoxy-(5Z,8Z,11Z,13E)-eicosatetraenoate + 2 glutathione = (15S)-hydroxy-(5Z,8Z,11Z,13E)-eicosatetraenoate + glutathione disulfide + H2O. It carries out the reaction (5S)-hydroperoxy-(6E,8Z,11Z,14Z,17Z)-eicosapentaenoate + 2 glutathione = (5S)-hydroxy-(6E,8Z,11Z,14Z,17Z)-eicosapentaenoate + glutathione disulfide + H2O. It catalyses the reaction (12S)-hydroperoxy-(5Z,8Z,10E,14Z,17Z)-eicosapentaenoate + 2 glutathione = (12S)-hydroxy-(5Z,8Z,10E,14Z,17Z)-eicosapentaenoate + glutathione disulfide + H2O. The catalysed reaction is (15S)-hydroperoxy-(5Z,8Z,11Z,13E,17Z)-eicosapentaenoate + 2 glutathione = (15S)-hydroxy-(5Z,8Z,11Z,13E,17Z)-eicosapentaenoate + glutathione disulfide + H2O. The enzyme catalyses (15S)-hydroperoxy-(11Z,13E)-eicosadienoate + 2 glutathione = (15S)-hydroxy-(11Z,13E)-eicosadienoate + glutathione disulfide + H2O. It carries out the reaction (17S)-hydroperoxy-(4Z,7Z,10Z,13Z,15E,19Z)-docosahexaenoate + 2 glutathione = (17S)-hydroxy-(4Z,7Z,10Z,13Z,15E,19Z)-docosahexaenoate + glutathione disulfide + H2O. Functionally, catalyzes the reduction of hydroperoxides in a glutathione-dependent manner thus regulating cellular redox homeostasis. Can reduce small soluble hydroperoxides such as H2O2, cumene hydroperoxide and tert-butyl hydroperoxide, as well as several fatty acid-derived hydroperoxides. In platelets catalyzes the reduction of 12-hydroperoxyeicosatetraenoic acid, the primary product of the arachidonate 12-lipoxygenase pathway. The chain is Glutathione peroxidase 1 (GPX1) from Oryctolagus cuniculus (Rabbit).